Here is a 123-residue protein sequence, read N- to C-terminus: MEQRALKHHRERLGEAIREEIGAILEGELGDPRIGLVTVSEVMIASNGKSAIVLVAVAGEEQEAVDTLEGLAAATGYIRHEVAARLGLRVAPELLFRLDQTERYGGRVEELLKRVNKRKKSSR.

Belongs to the RbfA family. As to quaternary structure, monomer. Binds 30S ribosomal subunits, but not 50S ribosomal subunits or 70S ribosomes.

The protein resides in the cytoplasm. Its function is as follows. One of several proteins that assist in the late maturation steps of the functional core of the 30S ribosomal subunit. Associates with free 30S ribosomal subunits (but not with 30S subunits that are part of 70S ribosomes or polysomes). Required for efficient processing of 16S rRNA. May interact with the 5'-terminal helix region of 16S rRNA. This is Ribosome-binding factor A from Koribacter versatilis (strain Ellin345).